We begin with the raw amino-acid sequence, 261 residues long: Cytochrome c oxidase subunit 3 (261 aa).

At 1 to 15 (MTHQTHAYHMVNPSP) the chain is on the mitochondrial matrix side. A helical membrane pass occupies residues 16-34 (WPLTGALSALLMTSGLTMW). Topologically, residues 35–40 (FHYNST) are mitochondrial intermembrane. Residues 41–66 (ILLMLGLTTNMLTMYQWWRDIIREST) form a helical membrane-spanning segment. The Mitochondrial matrix segment spans residues 67–72 (FQGHHT). The chain crosses the membrane as a helical span at residues 73–105 (PTVQKGLRYGMILFIISEVLFFTGFFWAFYHSS). Residues 106–128 (LAPTPELGGCWPPTGIHPLNPLE) are Mitochondrial intermembrane-facing. The helical transmembrane segment at 129–152 (VPLLNTSVLLASGVSITWAHHSLM) threads the bilayer. Over 153 to 155 (EGD) the chain is Mitochondrial matrix. The chain crosses the membrane as a helical span at residues 156-183 (RNHMLQALFITIALGIYFTLLQASEYYE). Residues 184–190 (APFTISD) lie on the Mitochondrial intermembrane side of the membrane. The chain crosses the membrane as a helical span at residues 191–223 (GVYGSTFFVATGFHGLHVIIGSTFLIVCFFRQL). Topologically, residues 224-232 (KFHFTSSHH) are mitochondrial matrix. The helical transmembrane segment at 233 to 256 (FGFEAAAWYWHFVDVVWLFLYVSI) threads the bilayer. Over 257-261 (YWWGS) the chain is Mitochondrial intermembrane.

It belongs to the cytochrome c oxidase subunit 3 family. As to quaternary structure, component of the cytochrome c oxidase (complex IV, CIV), a multisubunit enzyme composed of 14 subunits. The complex is composed of a catalytic core of 3 subunits MT-CO1, MT-CO2 and MT-CO3, encoded in the mitochondrial DNA, and 11 supernumerary subunits COX4I, COX5A, COX5B, COX6A, COX6B, COX6C, COX7A, COX7B, COX7C, COX8 and NDUFA4, which are encoded in the nuclear genome. The complex exists as a monomer or a dimer and forms supercomplexes (SCs) in the inner mitochondrial membrane with NADH-ubiquinone oxidoreductase (complex I, CI) and ubiquinol-cytochrome c oxidoreductase (cytochrome b-c1 complex, complex III, CIII), resulting in different assemblies (supercomplex SCI(1)III(2)IV(1) and megacomplex MCI(2)III(2)IV(2)).

The protein resides in the mitochondrion inner membrane. The catalysed reaction is 4 Fe(II)-[cytochrome c] + O2 + 8 H(+)(in) = 4 Fe(III)-[cytochrome c] + 2 H2O + 4 H(+)(out). In terms of biological role, component of the cytochrome c oxidase, the last enzyme in the mitochondrial electron transport chain which drives oxidative phosphorylation. The respiratory chain contains 3 multisubunit complexes succinate dehydrogenase (complex II, CII), ubiquinol-cytochrome c oxidoreductase (cytochrome b-c1 complex, complex III, CIII) and cytochrome c oxidase (complex IV, CIV), that cooperate to transfer electrons derived from NADH and succinate to molecular oxygen, creating an electrochemical gradient over the inner membrane that drives transmembrane transport and the ATP synthase. Cytochrome c oxidase is the component of the respiratory chain that catalyzes the reduction of oxygen to water. Electrons originating from reduced cytochrome c in the intermembrane space (IMS) are transferred via the dinuclear copper A center (CU(A)) of subunit 2 and heme A of subunit 1 to the active site in subunit 1, a binuclear center (BNC) formed by heme A3 and copper B (CU(B)). The BNC reduces molecular oxygen to 2 water molecules using 4 electrons from cytochrome c in the IMS and 4 protons from the mitochondrial matrix. The chain is Cytochrome c oxidase subunit 3 (MT-CO3) from Tragelaphus imberbis (Lesser kudu).